A 615-amino-acid polypeptide reads, in one-letter code: MFQVLKFCWKVLCFIRDLVMNVVFLGFVLLLVAIISFSSGGKKSTALTSEGALLLNLDGYLADNRDETLRWQDALSELNGEHVPRKISTFDVVFAIQQAEDDPKIKGLVLDLNYFEGADLPALDFIGGAISHFKDAGKPVIAYADNYSQGQYYLASFADEIYLNSIGSVDIHGLSQENLYFKEMLDKLAVTPHIFRVGTYKSAVEPFLRNDMSAEAKANMQRWLGEMWNNYVLSVSENRNIKKDRILPNAKQYLAELKALKGNSTAYAQQRGLVTDVVTRLDLDKKLSALFGKGSDGKANLIEFDDYLTQLPDRLEHYNVPNKIAVVNVEGTIIDGESDEENAGGDTIARILRKAHDDNSVKAVILRVNSPGGSAFASEIIRQETENLQKIGKPVIVSMGAMAASGGYWISSTADYIIADSNTITGSIGIFTMFPTFENSIKKIGVHADGVSTTELANTSAFSPLAKPVQDIYQTEIEHGYDRFLEIVSKGRQLSKTQVDKLAQGQVWLGSDAFQNGLVDEIGSFNEAVNKAEQLVNQRQDTAVQDFSVEWFTDDNVSLISTLLSDTKKGAQEQLVKWLGLPAPIQKLQKELNILTKFNDPKGQYLYCLNCGKVK.

At 1-17 (MFQVLKFCWKVLCFIRD) the chain is on the cytoplasmic side. Residues 18-38 (LVMNVVFLGFVLLLVAIISFS) traverse the membrane as a helical segment. The Periplasmic portion of the chain corresponds to 39–615 (SGGKKSTALT…LYCLNCGKVK (577 aa)). Catalysis depends on Lys-201, which acts as the Proton donor/acceptor. Ser-405 acts as the Nucleophile in catalysis.

This sequence belongs to the peptidase S49 family. Homotetramer.

The protein localises to the cell inner membrane. Digests cleaved signal peptides in vitro, its in vivo function is unknown. This activity is necessary to maintain proper secretion of mature proteins across the membrane. This is Protease 4 (sppA) from Haemophilus influenzae (strain ATCC 51907 / DSM 11121 / KW20 / Rd).